The sequence spans 177 residues: Protein BROTHER of FT and TFL 1 (177 aa).

This sequence belongs to the phosphatidylethanolamine-binding protein family.

Its subcellular location is the cytoplasm. Functionally, may form complexes with phosphorylated ligands by interfering with kinases and their effectors. This is Protein BROTHER of FT and TFL 1 (BFT) from Arabidopsis thaliana (Mouse-ear cress).